Reading from the N-terminus, the 728-residue chain is FYN-binding protein 2 (728 aa).

Disordered regions lie at residues 17-76 (QNLD…PLQP), 250-287 (QAPE…RPPI), and 367-390 (PGKN…EKQP). Over residues 42 to 75 (GTQSTQILANGKPLSSNHKQRTPYCSSSESQPLQ) the composition is skewed to polar residues. Residues 276–285 (GPPPPKPSRP) are compositionally biased toward pro residues. Residues 377–390 (SAKHEDKKMKEKQP) show a composition bias toward basic and acidic residues. Residue Tyr-491 is modified to Phosphotyrosine. An SH2-binding; to LCP2 motif is present at residues 521-524 (YEDV). Position 587 is a phosphotyrosine (Tyr-587). Residues 664–724 (IVINTAVACS…LIEHLDFKHQ (61 aa)) form the SH3 domain.

In terms of assembly, interacts with SKAP1, LCK and FYN. The phosphorylated form interacts with LCP2. Phosphorylation is required for its function in T-cell activation. In terms of tissue distribution, expressed in T-cells (at protein level). Widely expressed.

The protein localises to the membrane raft. Adapter protein that plays a role in T-cell receptor (TCR)-mediated activation of signaling pathways. Required for T-cell activation and integrin-mediated T-cell adhesion in response to TCR stimulation. The protein is FYN-binding protein 2 of Homo sapiens (Human).